The sequence spans 123 residues: Large ribosomal subunit protein uL29 (123 aa).

The protein belongs to the universal ribosomal protein uL29 family.

This chain is Large ribosomal subunit protein uL29 (rpl-35), found in Caenorhabditis elegans.